A 317-amino-acid polypeptide reads, in one-letter code: Putative toluene-4-sulfonate monooxygenase system reductase subunit TsaB2 (317 aa).

The region spanning 4-106 (DVPVTVAAVR…SAPRNLFEMA (103 aa)) is the FAD-binding FR-type domain. 110 to 220 (RRVLLLAGGI…PGSVRMERFK (111 aa)) lines the NAD(+) pocket. In terms of domain architecture, 2Fe-2S ferredoxin-type spans 232–317 (FELVLQRAGL…CGGGRLVLDI (86 aa)). Residues Cys-266, Cys-271, and Cys-274 each contribute to the [2Fe-2S] cluster site.

As to quaternary structure, monomer. Part of the p-toluenesulfonate methyl-monooxygenase complex TsaBM, comprising the reductase TsaB and the oxygenase TsaM. It depends on FMN as a cofactor.

Involved in the toluene-4-sulfonate degradation pathway. The chain is Putative toluene-4-sulfonate monooxygenase system reductase subunit TsaB2 (tsaB2) from Comamonas testosteroni (Pseudomonas testosteroni).